Here is a 117-residue protein sequence, read N- to C-terminus: Aspartate 1-decarboxylase (117 aa).

Catalysis depends on Ser-25, which acts as the Schiff-base intermediate with substrate; via pyruvic acid. Residue Ser-25 is modified to Pyruvic acid (Ser). Thr-57 is a substrate binding site. Tyr-58 (proton donor) is an active-site residue. 73–75 (GAA) contacts substrate.

This sequence belongs to the PanD family. Heterooctamer of four alpha and four beta subunits. The cofactor is pyruvate. Post-translationally, is synthesized initially as an inactive proenzyme, which is activated by self-cleavage at a specific serine bond to produce a beta-subunit with a hydroxyl group at its C-terminus and an alpha-subunit with a pyruvoyl group at its N-terminus.

It localises to the cytoplasm. It carries out the reaction L-aspartate + H(+) = beta-alanine + CO2. Its pathway is cofactor biosynthesis; (R)-pantothenate biosynthesis; beta-alanine from L-aspartate: step 1/1. Catalyzes the pyruvoyl-dependent decarboxylation of aspartate to produce beta-alanine. The sequence is that of Aspartate 1-decarboxylase from Thermoanaerobacter pseudethanolicus (strain ATCC 33223 / 39E) (Clostridium thermohydrosulfuricum).